The chain runs to 681 residues: Elongation factor G (681 aa).

The tr-type G domain occupies 5–279 (KNIRNIGIIA…SIVNFLPSPI (275 aa)). Residues 14–21 (AHVDAGKT), 82–86 (DTPGH), and 136–139 (NKLD) each bind GTP.

Belongs to the TRAFAC class translation factor GTPase superfamily. Classic translation factor GTPase family. EF-G/EF-2 subfamily.

The protein resides in the cytoplasm. Catalyzes the GTP-dependent ribosomal translocation step during translation elongation. During this step, the ribosome changes from the pre-translocational (PRE) to the post-translocational (POST) state as the newly formed A-site-bound peptidyl-tRNA and P-site-bound deacylated tRNA move to the P and E sites, respectively. Catalyzes the coordinated movement of the two tRNA molecules, the mRNA and conformational changes in the ribosome. This is Elongation factor G from Carsonella ruddii (strain PV).